The sequence spans 115 residues: Protein SPIRAL1-like 2 (115 aa).

Positions 29 to 48 are disordered; it reads AKAKPAAAAEKETTPAPVKK.

The protein belongs to the SPIRAL1 family.

In terms of biological role, acts in maintaining the cortical microtubules organization essential for anisotropic cell growth. The protein is Protein SPIRAL1-like 2 of Oryza sativa subsp. japonica (Rice).